A 185-amino-acid chain; its full sequence is Probable NEDD8-conjugating enzyme Ubc12-like (185 aa).

The disordered stretch occupies residues 8–29; that stretch reads KEKQREESQSNNGRGASTVKKQ. A compositionally biased stretch (polar residues) spans 16–28; it reads QSNNGRGASTVKK. A UBC core domain is found at 31–176; sequence AGELRLHKDI…VRRAMMGGQV (146 aa). Residue Cys-114 is the Glycyl thioester intermediate of the active site.

The protein belongs to the ubiquitin-conjugating enzyme family. UBC12 subfamily.

It participates in protein modification; protein neddylation. Its function is as follows. Accepts the ubiquitin-like protein NEDD8/RUB1 from the ECR1-AXR1 E1 complex and catalyzes its covalent attachment to other proteins. This chain is Probable NEDD8-conjugating enzyme Ubc12-like (RCE2), found in Arabidopsis thaliana (Mouse-ear cress).